Here is a 280-residue protein sequence, read N- to C-terminus: Golgi to ER traffic protein 2 (280 aa).

Composition is skewed to basic and acidic residues over residues 1–17, 44–62, and 71–80; these read MSLSEAEKRKILRERRQ, SALDEKPEVVEEIPREAVK, and AKKESTAQAK. The segment at 1-80 is disordered; the sequence is MSLSEAEKRK…AKKESTAQAK (80 aa). The Cytoplasmic segment spans residues 1–146; it reads MSLSEAEKRK…VEYHKYRVNT (146 aa). The chain crosses the membrane as a helical span at residues 147–166; the sequence is LTAKTTLVKWIVLLAYIFLL. Residues 167-191 lie on the Lumenal side of the membrane; that stretch reads TRTDDTYFPFVVRSYLPEVFTSQSS. The chain crosses the membrane as a helical span at residues 192-211; that stretch reads FFSIFLTFEILATSIYYQLS. Topologically, residues 212–258 are cytoplasmic; that stretch reads VGVERETGVKTLQDTSKIVSLVSMVPEGILPIADLRGKVILAMKYWN. A helical transmembrane segment spans residues 259–279; the sequence is IIAMMIGDVCFVLVAIGLVSQ. A topological domain (lumenal) is located at residue isoleucine 280.

The protein belongs to the GET2 family. As to quaternary structure, component of the Golgi to ER traffic (GET) complex, which is composed of GET1, GET2 and GET3. Within the complex, GET1 and GET2 form a heterotetramer which is stabilized by phosphatidylinositol binding and which binds to the GET3 homodimer.

Its subcellular location is the endoplasmic reticulum membrane. It localises to the golgi apparatus membrane. In terms of biological role, required for the post-translational delivery of tail-anchored (TA) proteins to the endoplasmic reticulum. Together with GET1, acts as a membrane receptor for soluble GET3, which recognizes and selectively binds the transmembrane domain of TA proteins in the cytosol. The GET complex cooperates with the HDEL receptor ERD2 to mediate the ATP-dependent retrieval of resident ER proteins that contain a C-terminal H-D-E-L retention signal from the Golgi to the ER. In Candida glabrata (strain ATCC 2001 / BCRC 20586 / JCM 3761 / NBRC 0622 / NRRL Y-65 / CBS 138) (Yeast), this protein is Golgi to ER traffic protein 2.